We begin with the raw amino-acid sequence, 209 residues long: Holliday junction branch migration complex subunit RuvA (209 aa).

Residues 1–70 (MINYLRGQAI…EEQPLLYGFG (70 aa)) form a domain I region. Positions 71–149 (TAPERELFRQ…AWRQLREATT (79 aa)) are domain II. The tract at residues 150–158 (TITAILPAA) is flexible linker. Positions 158-209 (AAILEDVQMTLLALGYSQEEIDRAMAVLSQDALFSKNTQPEDWIKGAINWLG) are domain III.

The protein belongs to the RuvA family. As to quaternary structure, homotetramer. Forms an RuvA(8)-RuvB(12)-Holliday junction (HJ) complex. HJ DNA is sandwiched between 2 RuvA tetramers; dsDNA enters through RuvA and exits via RuvB. An RuvB hexamer assembles on each DNA strand where it exits the tetramer. Each RuvB hexamer is contacted by two RuvA subunits (via domain III) on 2 adjacent RuvB subunits; this complex drives branch migration. In the full resolvosome a probable DNA-RuvA(4)-RuvB(12)-RuvC(2) complex forms which resolves the HJ.

The protein localises to the cytoplasm. The RuvA-RuvB-RuvC complex processes Holliday junction (HJ) DNA during genetic recombination and DNA repair, while the RuvA-RuvB complex plays an important role in the rescue of blocked DNA replication forks via replication fork reversal (RFR). RuvA specifically binds to HJ cruciform DNA, conferring on it an open structure. The RuvB hexamer acts as an ATP-dependent pump, pulling dsDNA into and through the RuvAB complex. HJ branch migration allows RuvC to scan DNA until it finds its consensus sequence, where it cleaves and resolves the cruciform DNA. In Microcystis aeruginosa (strain NIES-843 / IAM M-2473), this protein is Holliday junction branch migration complex subunit RuvA.